Here is a 693-residue protein sequence, read N- to C-terminus: MARDFSLKNTRNIGIMAHIDAGKTTTTERILYYTGRIHKIGETHEGASQMDWMEQEQDRGITITSAATTAQWQGHRVNIIDTPGHVDFTVEVERSLRVLDGAVTVLDAQSGVEPQTETVWRQATTYGVPRIVFVNKMDKLGANFEYSVSTLHDRLQANAAPIQLPIGAEDEFEAIIDLVEMKCFKYTNDLGTEIDEIEIPEDHKERAEEARAQLIEAVAENNDDLMEKYLGDEEISVDELKDAIRQATTDVEFYPVLCGTAFKNKGVQLMLNAVIDYLPSPLDVKPIIGHRANNPDEEVVAKPDDSAEFAALAFKVMTDPYVGKLTFFRVYSGTLSSGSYVKNSSKDKRERVGRLLQMHANSRQEIDTVYSGEIAAAVGLKETGTGDTLCGEKNDIILESMEFPEPVIHLSVEPKSKADQDKMTQALVKLQEEDPTFHAHTDEETGQVIIGGMGELHLDILVDRMKKEFNVECNVGAPMVSYRETFKQPAQVQGKFSRQSGGRGQYGDVHIEFTPNETGGGFEFENAIVGGVVPREYIPSVEQGLKDAMENGVLAGYPLIDVKAKLFDGSYHDVDSSEMAFKIAASLALKEAAKKCDPVILEPMMKVTIEMPEEYMGDIMGDVTARRGRVDGMEPRGNAQVVNAYVPLSEMFGYATSLRSNTQGRGTYTMYFDHYAEVPKSIAEEIIKKNKGE.

Residues 8 to 282 (KNTRNIGIMA…AVIDYLPSPL (275 aa)) enclose the tr-type G domain. GTP is bound by residues 17-24 (AHIDAGKT), 81-85 (DTPGH), and 135-138 (NKMD).

The protein belongs to the TRAFAC class translation factor GTPase superfamily. Classic translation factor GTPase family. EF-G/EF-2 subfamily.

The protein localises to the cytoplasm. Functionally, catalyzes the GTP-dependent ribosomal translocation step during translation elongation. During this step, the ribosome changes from the pre-translocational (PRE) to the post-translocational (POST) state as the newly formed A-site-bound peptidyl-tRNA and P-site-bound deacylated tRNA move to the P and E sites, respectively. Catalyzes the coordinated movement of the two tRNA molecules, the mRNA and conformational changes in the ribosome. In Staphylococcus epidermidis (strain ATCC 35984 / DSM 28319 / BCRC 17069 / CCUG 31568 / BM 3577 / RP62A), this protein is Elongation factor G.